The sequence spans 222 residues: Pyridoxine/pyridoxamine 5'-phosphate oxidase (222 aa).

Substrate contacts are provided by residues 11-14 (RVEY) and lysine 79. FMN contacts are provided by residues 74 to 79 (RTVLCK), 89 to 90 (YT), lysine 96, and glutamine 118. Residues tyrosine 136, arginine 140, and serine 144 each coordinate substrate. FMN contacts are provided by residues 153 to 154 (QS) and tryptophan 199. Residue 205–207 (RVH) participates in substrate binding. Arginine 209 contacts FMN.

It belongs to the pyridoxamine 5'-phosphate oxidase family. As to quaternary structure, homodimer. FMN serves as cofactor.

It carries out the reaction pyridoxamine 5'-phosphate + O2 + H2O = pyridoxal 5'-phosphate + H2O2 + NH4(+). It catalyses the reaction pyridoxine 5'-phosphate + O2 = pyridoxal 5'-phosphate + H2O2. It participates in cofactor metabolism; pyridoxal 5'-phosphate salvage; pyridoxal 5'-phosphate from pyridoxamine 5'-phosphate: step 1/1. Its pathway is cofactor metabolism; pyridoxal 5'-phosphate salvage; pyridoxal 5'-phosphate from pyridoxine 5'-phosphate: step 1/1. Its function is as follows. Catalyzes the oxidation of either pyridoxine 5'-phosphate (PNP) or pyridoxamine 5'-phosphate (PMP) into pyridoxal 5'-phosphate (PLP). This chain is Pyridoxine/pyridoxamine 5'-phosphate oxidase, found in Mycolicibacterium vanbaalenii (strain DSM 7251 / JCM 13017 / BCRC 16820 / KCTC 9966 / NRRL B-24157 / PYR-1) (Mycobacterium vanbaalenii).